Consider the following 555-residue polypeptide: 2-succinyl-5-enolpyruvyl-6-hydroxy-3-cyclohexene-1-carboxylate synthase (555 aa).

The protein belongs to the TPP enzyme family. MenD subfamily. As to quaternary structure, homodimer. It depends on Mg(2+) as a cofactor. Mn(2+) is required as a cofactor. Thiamine diphosphate serves as cofactor.

The catalysed reaction is isochorismate + 2-oxoglutarate + H(+) = 5-enolpyruvoyl-6-hydroxy-2-succinyl-cyclohex-3-ene-1-carboxylate + CO2. Its pathway is quinol/quinone metabolism; 1,4-dihydroxy-2-naphthoate biosynthesis; 1,4-dihydroxy-2-naphthoate from chorismate: step 2/7. It functions in the pathway quinol/quinone metabolism; menaquinone biosynthesis. Catalyzes the thiamine diphosphate-dependent decarboxylation of 2-oxoglutarate and the subsequent addition of the resulting succinic semialdehyde-thiamine pyrophosphate anion to isochorismate to yield 2-succinyl-5-enolpyruvyl-6-hydroxy-3-cyclohexene-1-carboxylate (SEPHCHC). The sequence is that of 2-succinyl-5-enolpyruvyl-6-hydroxy-3-cyclohexene-1-carboxylate synthase from Bacteroides fragilis (strain ATCC 25285 / DSM 2151 / CCUG 4856 / JCM 11019 / LMG 10263 / NCTC 9343 / Onslow / VPI 2553 / EN-2).